Here is a 151-residue protein sequence, read N- to C-terminus: Large ribosomal subunit protein bL9 (151 aa).

This sequence belongs to the bacterial ribosomal protein bL9 family.

Binds to the 23S rRNA. This Pelodictyon phaeoclathratiforme (strain DSM 5477 / BU-1) protein is Large ribosomal subunit protein bL9.